The chain runs to 161 residues: Nucleotide-binding protein Vapar_3769 (161 aa).

Belongs to the YajQ family.

Nucleotide-binding protein. The sequence is that of Nucleotide-binding protein Vapar_3769 from Variovorax paradoxus (strain S110).